A 358-amino-acid chain; its full sequence is DnaJ homolog subfamily B member 11 (358 aa).

Residues 1-22 (MAPQNLSTFCLLLLYLIGAVIA) form the signal peptide. In terms of domain architecture, J spans 25–90 (DFYKILGVPR…EKRKQYDTYG (66 aa)). Residue Thr188 is modified to Phosphothreonine. An N-linked (GlcNAc...) asparagine glycan is attached at Asn261.

In terms of assembly, part of a large chaperone multiprotein complex comprising DNAJB11, HSP90B1, HSPA5, HYOU, PDIA2, PDIA4, PDIA6, PPIB, SDF2L1, UGGT1 and very small amounts of ERP29, but not, or at very low levels, CALR nor CANX. Binds to denatured substrates in an ATP-independent manner. Interacts via the J domain with HSPA5 in an ATP-dependent manner. In terms of processing, contains high-mannose Endo H-sensitive carbohydrates. Post-translationally, cys-169, Cys-171, Cys-193 and Cys-196 form intramolecular disulfide bonds. The preferential partner for each Cys is not known. Thr-188 was reported to be phosphorylated upon DNA damage by ATM or ATR; however as this position has been shown to be in the ER lumen, the in vivo relevance is not proven. Widely expressed.

Its subcellular location is the endoplasmic reticulum lumen. In terms of biological role, as a co-chaperone for HSPA5 it is required for proper folding, trafficking or degradation of proteins. Binds directly to both unfolded proteins that are substrates for ERAD and nascent unfolded peptide chains, but dissociates from the HSPA5-unfolded protein complex before folding is completed. May help recruiting HSPA5 and other chaperones to the substrate. Stimulates HSPA5 ATPase activity. It is necessary for maturation and correct trafficking of PKD1. This is DnaJ homolog subfamily B member 11 (DNAJB11) from Homo sapiens (Human).